Reading from the N-terminus, the 622-residue chain is Chaperone protein HtpG (622 aa).

The tract at residues Met-1 to Arg-322 is a; substrate-binding. A b region spans residues Gln-323–Arg-539. A c region spans residues Val-540–Ala-622.

The protein belongs to the heat shock protein 90 family. In terms of assembly, homodimer.

It is found in the cytoplasm. Functionally, molecular chaperone. Has ATPase activity. In Desulfotalea psychrophila (strain LSv54 / DSM 12343), this protein is Chaperone protein HtpG.